A 934-amino-acid polypeptide reads, in one-letter code: Isoleucine--tRNA ligase (934 aa).

The 'HIGH' region motif lies at 58 to 68 (PYANGEIHIGH). Residue Glu-559 coordinates L-isoleucyl-5'-AMP. The 'KMSKS' region motif lies at 600 to 604 (KMSKS). Position 603 (Lys-603) interacts with ATP. The Zn(2+) site is built by Cys-897, Cys-900, Cys-917, and Cys-920.

It belongs to the class-I aminoacyl-tRNA synthetase family. IleS type 1 subfamily. As to quaternary structure, monomer. Zn(2+) serves as cofactor.

Its subcellular location is the cytoplasm. The enzyme catalyses tRNA(Ile) + L-isoleucine + ATP = L-isoleucyl-tRNA(Ile) + AMP + diphosphate. Catalyzes the attachment of isoleucine to tRNA(Ile). As IleRS can inadvertently accommodate and process structurally similar amino acids such as valine, to avoid such errors it has two additional distinct tRNA(Ile)-dependent editing activities. One activity is designated as 'pretransfer' editing and involves the hydrolysis of activated Val-AMP. The other activity is designated 'posttransfer' editing and involves deacylation of mischarged Val-tRNA(Ile). The sequence is that of Isoleucine--tRNA ligase from Teredinibacter turnerae (strain ATCC 39867 / T7901).